Reading from the N-terminus, the 144-residue chain is D-aminoacyl-tRNA deacylase (144 aa).

The short motif at 136-137 (GP) is the Gly-cisPro motif, important for rejection of L-amino acids element.

The protein belongs to the DTD family. Homodimer.

Its subcellular location is the cytoplasm. It catalyses the reaction glycyl-tRNA(Ala) + H2O = tRNA(Ala) + glycine + H(+). The catalysed reaction is a D-aminoacyl-tRNA + H2O = a tRNA + a D-alpha-amino acid + H(+). Functionally, an aminoacyl-tRNA editing enzyme that deacylates mischarged D-aminoacyl-tRNAs. Also deacylates mischarged glycyl-tRNA(Ala), protecting cells against glycine mischarging by AlaRS. Acts via tRNA-based rather than protein-based catalysis; rejects L-amino acids rather than detecting D-amino acids in the active site. By recycling D-aminoacyl-tRNA to D-amino acids and free tRNA molecules, this enzyme counteracts the toxicity associated with the formation of D-aminoacyl-tRNA entities in vivo and helps enforce protein L-homochirality. This chain is D-aminoacyl-tRNA deacylase, found in Aliivibrio fischeri (strain MJ11) (Vibrio fischeri).